Reading from the N-terminus, the 189-residue chain is Probable nicotinate-nucleotide adenylyltransferase (189 aa).

It belongs to the NadD family.

The catalysed reaction is nicotinate beta-D-ribonucleotide + ATP + H(+) = deamido-NAD(+) + diphosphate. It participates in cofactor biosynthesis; NAD(+) biosynthesis; deamido-NAD(+) from nicotinate D-ribonucleotide: step 1/1. Functionally, catalyzes the reversible adenylation of nicotinate mononucleotide (NaMN) to nicotinic acid adenine dinucleotide (NaAD). The sequence is that of Probable nicotinate-nucleotide adenylyltransferase from Staphylococcus aureus (strain N315).